The primary structure comprises 330 residues: ADP-L-glycero-D-manno-heptose-6-epimerase (330 aa).

NADP(+) is bound by residues 11-12, 32-33, Lys-39, Lys-54, 75-79, and Asn-92; these read FI, DN, and EGACS. Tyr-139 serves as the catalytic Proton acceptor. Residue Lys-143 participates in NADP(+) binding. Asn-168 provides a ligand contact to substrate. The NADP(+) site is built by Val-169 and Lys-177. The Proton acceptor role is filled by Lys-177. Residues Arg-179, His-186, 200–203, Arg-213, and Tyr-292 each bind substrate; that span reads FGEY.

The protein belongs to the NAD(P)-dependent epimerase/dehydratase family. HldD subfamily. In terms of assembly, homopentamer. Requires NADP(+) as cofactor.

It carries out the reaction ADP-D-glycero-beta-D-manno-heptose = ADP-L-glycero-beta-D-manno-heptose. Its pathway is nucleotide-sugar biosynthesis; ADP-L-glycero-beta-D-manno-heptose biosynthesis; ADP-L-glycero-beta-D-manno-heptose from D-glycero-beta-D-manno-heptose 7-phosphate: step 4/4. Its function is as follows. Catalyzes the interconversion between ADP-D-glycero-beta-D-manno-heptose and ADP-L-glycero-beta-D-manno-heptose via an epimerization at carbon 6 of the heptose. This is ADP-L-glycero-D-manno-heptose-6-epimerase from Burkholderia cenocepacia (strain ATCC BAA-245 / DSM 16553 / LMG 16656 / NCTC 13227 / J2315 / CF5610) (Burkholderia cepacia (strain J2315)).